The primary structure comprises 182 residues: MDCKIKAAGKNSGIFHEGGTKSSKSFLTVFIRSVFPLSPSFPAGGGIWGPMEKKPGGVGKKKGSEKKTAQGNIFFSTERDAGQEKCGILYKHCFSILYGFFWKKADKPKEKTGNGSGLGIVFPIGQKKIPEPADSDIFLPCFRYAAASDFTKAKRFLVEITAVYWVSLEAQPSSASCLFILI.

The interval 46–65 (GIWGPMEKKPGGVGKKKGSE) is disordered.

In terms of biological role, multicopy expression suppresses glucose-uptake defects in various yeast mutants. The polypeptide is Hexose transport activator protein (AHT1) (Saccharomyces cerevisiae (strain ATCC 204508 / S288c) (Baker's yeast)).